The sequence spans 483 residues: Cobyric acid synthase (483 aa).

The GATase cobBQ-type domain maps to 252-439 (KLNVVVPVLT…LHGFFDEAEA (188 aa)). Cys-333 serves as the catalytic Nucleophile. His-431 is an active-site residue.

Belongs to the CobB/CobQ family. CobQ subfamily.

The protein operates within cofactor biosynthesis; adenosylcobalamin biosynthesis. In terms of biological role, catalyzes amidations at positions B, D, E, and G on adenosylcobyrinic A,C-diamide. NH(2) groups are provided by glutamine, and one molecule of ATP is hydrogenolyzed for each amidation. The chain is Cobyric acid synthase from Vibrio parahaemolyticus serotype O3:K6 (strain RIMD 2210633).